The primary structure comprises 92 residues: Small ribosomal subunit protein bS18 (92 aa).

It belongs to the bacterial ribosomal protein bS18 family. As to quaternary structure, part of the 30S ribosomal subunit. Forms a tight heterodimer with protein bS6.

In terms of biological role, binds as a heterodimer with protein bS6 to the central domain of the 16S rRNA, where it helps stabilize the platform of the 30S subunit. This Caulobacter sp. (strain K31) protein is Small ribosomal subunit protein bS18.